The primary structure comprises 251 residues: Tritrans,polycis-undecaprenyl-diphosphate synthase (geranylgeranyl-diphosphate specific) (251 aa).

Aspartate 29 is a catalytic residue. Aspartate 29 contributes to the Mg(2+) binding site. Substrate-binding positions include 30-33, phenylalanine 34, histidine 46, and 74-76; these read GNRR and STE. Asparagine 77 acts as the Proton acceptor in catalysis. Residues phenylalanine 78, arginine 80, arginine 200, and 206–208 each bind substrate; that span reads RLS.

Belongs to the UPP synthase family. Homodimer. Requires Mg(2+) as cofactor.

It carries out the reaction geranylgeranyl diphosphate + 7 isopentenyl diphosphate = tri-trans,hepta-cis-undecaprenyl diphosphate + 7 diphosphate. In terms of biological role, catalyzes the sequential condensation of isopentenyl diphosphate (IPP) with geranylgeranyl diphosphate (GGPP) to yield (2Z,6Z,10Z,14Z,18Z,22Z,26Z,30E,34E,38E)-undecaprenyl diphosphate (tritrans,heptacis-UPP). It is probably the precursor of glycosyl carrier lipids. The chain is Tritrans,polycis-undecaprenyl-diphosphate synthase (geranylgeranyl-diphosphate specific) from Archaeoglobus fulgidus (strain ATCC 49558 / DSM 4304 / JCM 9628 / NBRC 100126 / VC-16).